The following is a 191-amino-acid chain: Fe/S biogenesis protein NfuA (191 aa).

[4Fe-4S] cluster is bound by residues C149 and C152.

Belongs to the NfuA family. Homodimer. Requires [4Fe-4S] cluster as cofactor.

Involved in iron-sulfur cluster biogenesis. Binds a 4Fe-4S cluster, can transfer this cluster to apoproteins, and thereby intervenes in the maturation of Fe/S proteins. Could also act as a scaffold/chaperone for damaged Fe/S proteins. The sequence is that of Fe/S biogenesis protein NfuA from Pectobacterium carotovorum subsp. carotovorum (strain PC1).